The primary structure comprises 217 residues: Ribosomal RNA small subunit methyltransferase G (217 aa).

Residues Gly79, Phe84, 130–131, and Arg148 each bind S-adenosyl-L-methionine; that span reads AE.

Belongs to the methyltransferase superfamily. RNA methyltransferase RsmG family.

It is found in the cytoplasm. The catalysed reaction is guanosine(527) in 16S rRNA + S-adenosyl-L-methionine = N(7)-methylguanosine(527) in 16S rRNA + S-adenosyl-L-homocysteine. Specifically methylates the N7 position of guanine in position 527 of 16S rRNA. This is Ribosomal RNA small subunit methyltransferase G from Myxococcus xanthus (strain DK1622).